A 165-amino-acid polypeptide reads, in one-letter code: UPF0254 protein MmarC6_1720 (165 aa).

The protein belongs to the UPF0254 family.

This Methanococcus maripaludis (strain C6 / ATCC BAA-1332) protein is UPF0254 protein MmarC6_1720.